Consider the following 67-residue polypeptide: DNA-directed RNA polymerase subunit omega (67 aa).

This sequence belongs to the RNA polymerase subunit omega family. As to quaternary structure, the RNAP catalytic core consists of 2 alpha, 1 beta, 1 beta' and 1 omega subunit. When a sigma factor is associated with the core the holoenzyme is formed, which can initiate transcription.

It catalyses the reaction RNA(n) + a ribonucleoside 5'-triphosphate = RNA(n+1) + diphosphate. Its function is as follows. Promotes RNA polymerase assembly. Latches the N- and C-terminal regions of the beta' subunit thereby facilitating its interaction with the beta and alpha subunits. This chain is DNA-directed RNA polymerase subunit omega, found in Paraburkholderia phymatum (strain DSM 17167 / CIP 108236 / LMG 21445 / STM815) (Burkholderia phymatum).